A 429-amino-acid chain; its full sequence is Gamma-glutamyl phosphate reductase (429 aa).

It belongs to the gamma-glutamyl phosphate reductase family.

The protein resides in the cytoplasm. It carries out the reaction L-glutamate 5-semialdehyde + phosphate + NADP(+) = L-glutamyl 5-phosphate + NADPH + H(+). It participates in amino-acid biosynthesis; L-proline biosynthesis; L-glutamate 5-semialdehyde from L-glutamate: step 2/2. Functionally, catalyzes the NADPH-dependent reduction of L-glutamate 5-phosphate into L-glutamate 5-semialdehyde and phosphate. The product spontaneously undergoes cyclization to form 1-pyrroline-5-carboxylate. In Bradyrhizobium sp. (strain BTAi1 / ATCC BAA-1182), this protein is Gamma-glutamyl phosphate reductase.